A 217-amino-acid chain; its full sequence is Large ribosomal subunit protein uL3 (217 aa).

The protein belongs to the universal ribosomal protein uL3 family. In terms of assembly, part of the 50S ribosomal subunit. Forms a cluster with proteins L14 and L19.

One of the primary rRNA binding proteins, it binds directly near the 3'-end of the 23S rRNA, where it nucleates assembly of the 50S subunit. The sequence is that of Large ribosomal subunit protein uL3 from Mycolicibacterium paratuberculosis (strain ATCC BAA-968 / K-10) (Mycobacterium paratuberculosis).